The chain runs to 941 residues: MSLTTAAPLLALLKEKDAEVKAYALQSINEGVDQFWSEVSNDLPEIEALYDDNGFQDRKMAALIASKVYYNLGEYESAVKYALAAEEKFDIDEKTQYVETIVSKSIEMYIKLATEIYNKSGEQVNLDPKLTIVFEKMMTKCTQANEYKLALGIALEAFRLDVVKSILQERLGEDQEGGSMKLMSYVLTAATTTVFNSKFKDEILRLLFDLLMPLKNADYFITSKVVVNLNDPELATQLFEKLHDEEQIEVSYQIAFDLVSSASQHLLEKLHHNLSERSYDSGLLEILTGIPTCDYYNTFLLNKKNIDISLLNKSKSSLDGKFSLFHTAVSVSNGYMHAGTTDNSFIKANLSWLGKAQNWAKFSATASLGVIHKGNLIDGKKVMAPYLPGSRSSSRFIKGGSLYGLGLIYAGFGRDIVDYLKTHLIENSGTTGDEDVDVLLHGASLGVGLAAMGTANNEVYEALKDVLYNDVATSGEAAAFGIGLTLLGTGDETAINDLFTYAQETSHGNITRGLSMALALINYGRQEQADELIDKMLASENSLIRYGGAFSIALAYVGTGNNKVVKKLLHLAVSDSNDDVRRAAVTALGFVLLRDYTTVPRIVQLLAESHNAHDRCGAAFALGIACAGKGLQAAIDVLEPMTKDPADFVRQAAMISLSLVMIQQTEKMNPKVASINSHFLSVITNKHQEGLAKFGACVALGIMNAGGRNVTIQLENAETGTLDTKSVVGLAMFTQFWYWFPMAHFLSLSFTPTTIVGVRGSDLNIPKFDMNCYAREDVFSYPKMFEESADKEVEKVATAILSTTARAKARAKKTKKEKDTNEDDKKKKEKDLKKEETKKDDAKKESEAEEDFNKNRYSSKPYKIENMSRVLPQQLKYVQFIKEERFTPVRKFKGTNGVVVLKDNKPSEPASIIETVRQSKDVNAPLPTPFKVTEELDFEKI.

PC repeat units follow at residues 363–396 (SATA…SSRF), 400–437 (GSLY…EDVD), 442–476 (GASL…TSGE), 477–511 (AAAF…GNIT), 513–546 (GLSM…LIRY), 547–582 (GGAF…DVRR), 583–615 (AAVT…AHDR), 617–651 (GAAF…FVRQ), 652–689 (AAMI…KHQE), and 695–731 (GACV…VGLA). The interval 808–854 (KARAKKTKKEKDTNEDDKKKKEKDLKKEETKKDDAKKESEAEEDFNK) is disordered. Over residues 816–854 (KEKDTNEDDKKKKEKDLKKEETKKDDAKKESEAEEDFNK) the composition is skewed to basic and acidic residues.

It belongs to the proteasome subunit S1 family.

Acts as a regulatory subunit of the 26S proteasome which is involved in the ATP-dependent degradation of ubiquitinated proteins. The chain is 26S proteasome regulatory subunit RPN2 (RPN2) from Candida glabrata (strain ATCC 2001 / BCRC 20586 / JCM 3761 / NBRC 0622 / NRRL Y-65 / CBS 138) (Yeast).